Consider the following 78-residue polypeptide: Probable [Fe-S]-dependent transcriptional repressor (78 aa).

Iron-sulfur cluster is bound by residues Cys-56, Cys-61, Cys-64, and Cys-70.

Belongs to the FeoC family.

In terms of biological role, may function as a transcriptional regulator that controls feoABC expression. This chain is Probable [Fe-S]-dependent transcriptional repressor, found in Escherichia coli O127:H6 (strain E2348/69 / EPEC).